The primary structure comprises 375 residues: Paralyzed arrest at two-fold protein 6 (375 aa).

Residues 1-51 (MSTLGRSKTPSRDEPKKPGVFEKLSGTLSRKKKAPEDEHGNQGGAHHATDE) form a disordered region. Residues 10–20 (PSRDEPKKPGV) show a composition bias toward basic and acidic residues. Calponin-homology (CH) domains follow at residues 99–206 (AQVV…LHYR) and 266–373 (AHVK…TKYK).

This sequence belongs to the parvin family. In terms of assembly, may interact (via calponin-homology (CH) 2 domain) with pat-4 (via kinase domain). May form a complex with unc-112 and pat-4. Component of an integrin containing attachment complex, composed of at least pat-2, pat-3, pat-4, pat-6, unc-52, unc-97 and unc-112. In terms of tissue distribution, expressed from 1.5 stage embryos, mostly within the muscle cells. In adult hermaphrodites, expressed in the attachments of other muscles, including the uterine, anal depressor, anal sphincter, and vulval muscles, as well as in the spermatheca and the distal tip cells. Expressed in mechanosensory receptor neurons ALML/R, PLML/R, AVM, and PVM. Localizes at body wall muscle attachments.

Its subcellular location is the cytoplasm. It is found in the cytoskeleton. It localises to the myofibril. The protein resides in the sarcomere. The protein localises to the m line. Its subcellular location is the perikaryon. It is found in the cell projection. It localises to the axon. Its function is as follows. Involved in the regulation of cell adhesion and cytoskeleton organization. Component of an integrin containing attachment complex, which is required for muscle development and maintenance. During embryonic development, required to recruit cpna-1, unc-89 and myofilaments to newly forming integrin attachments composed of integrins pat-2/pat-3, pat-4 and unc-112. Also required to reposition the integrin-based attachments so that they form the highly ordered array of dense body and M-line attachments that are characteristic of mature muscle cells. During the formation of neuromuscular junctions at the larval stage, negatively regulates membrane protrusion from body wall muscles. This chain is Paralyzed arrest at two-fold protein 6, found in Caenorhabditis elegans.